The primary structure comprises 76 residues: Bomanin Tailed 2 (76 aa).

Positions 1 to 22 (MKALQVAGTLMLLFCLLAAVNA) are cleaved as a signal peptide. Positions 23–24 (TP) are cleaved as a propeptide — removed by a dipeptidylpeptidase. Residues cysteine 33 and cysteine 36 are joined by a disulfide bond.

Belongs to the bomanin family.

The protein resides in the secreted. Its function is as follows. Secreted immune-induced peptide induced by Toll signaling. Has a role in resistance to bacterial and fungal infections. The strength of antimicrobial activity appears to correlate with the overall level of expression. The sequence is that of Bomanin Tailed 2 from Drosophila melanogaster (Fruit fly).